Consider the following 255-residue polypeptide: Methylthioribulose-1-phosphate dehydratase (255 aa).

Residue Cys-98 coordinates substrate. Residues His-116 and His-118 each contribute to the Zn(2+) site. Glu-150 serves as the catalytic Proton donor/acceptor. Residue His-207 coordinates Zn(2+).

This sequence belongs to the aldolase class II family. MtnB subfamily. Zn(2+) serves as cofactor.

It is found in the cytoplasm. The enzyme catalyses 5-(methylsulfanyl)-D-ribulose 1-phosphate = 5-methylsulfanyl-2,3-dioxopentyl phosphate + H2O. It functions in the pathway amino-acid biosynthesis; L-methionine biosynthesis via salvage pathway; L-methionine from S-methyl-5-thio-alpha-D-ribose 1-phosphate: step 2/6. Catalyzes the dehydration of methylthioribulose-1-phosphate (MTRu-1-P) into 2,3-diketo-5-methylthiopentyl-1-phosphate (DK-MTP-1-P). This Pyricularia oryzae (strain 70-15 / ATCC MYA-4617 / FGSC 8958) (Rice blast fungus) protein is Methylthioribulose-1-phosphate dehydratase.